A 272-amino-acid polypeptide reads, in one-letter code: Orotidine 5'-phosphate decarboxylase (272 aa).

The active-site Proton donor is Lys-95.

The protein belongs to the OMP decarboxylase family. Type 2 subfamily.

It catalyses the reaction orotidine 5'-phosphate + H(+) = UMP + CO2. Its pathway is pyrimidine metabolism; UMP biosynthesis via de novo pathway; UMP from orotate: step 2/2. This Cupriavidus metallidurans (strain ATCC 43123 / DSM 2839 / NBRC 102507 / CH34) (Ralstonia metallidurans) protein is Orotidine 5'-phosphate decarboxylase.